Reading from the N-terminus, the 461-residue chain is Elongation factor 1-alpha, oocyte form (461 aa).

G2 carries the post-translational modification N,N,N-trimethylglycine. A tr-type G domain is found at 5–242; the sequence is KIHINIVVIG…DCIIPPQRPT (238 aa). A G1 region spans residues 14 to 21; it reads GHVDSGKS. GTP is bound at residue 14–21; it reads GHVDSGKS. A G2 region spans residues 70–74; sequence GITID. The segment at 91 to 94 is G3; it reads DAPG. Residues 91–95 and 153–156 each bind GTP; these read DAPGH and NKMD. Residues 153 to 156 are G4; that stretch reads NKMD. Residues 194–196 form a G5 region; it reads SGW. E301 and E374 each carry 5-glutamyl glycerylphosphorylethanolamine.

The protein belongs to the TRAFAC class translation factor GTPase superfamily. Classic translation factor GTPase family. EF-Tu/EF-1A subfamily. As to expression, oocyte.

It is found in the cytoplasm. Its function is as follows. This protein promotes the GTP-dependent binding of aminoacyl-tRNA to the A-site of ribosomes during protein biosynthesis. This Xenopus laevis (African clawed frog) protein is Elongation factor 1-alpha, oocyte form.